The following is a 332-amino-acid chain: Processive diacylglycerol alpha-glucosyltransferase (332 aa).

It belongs to the glycosyltransferase group 1 family. Glycosyltransferase 4 subfamily. It depends on Mg(2+) as a cofactor.

The protein localises to the cell membrane. The catalysed reaction is a 1,2-diacyl-sn-glycerol + UDP-alpha-D-glucose = a 1,2-diacyl-3-O-(alpha-D-glucopyranosyl)-sn-glycerol + UDP + H(+). It carries out the reaction a 1,2-diacyl-3-O-(alpha-D-glucopyranosyl)-sn-glycerol + UDP-alpha-D-glucose = a 1,2-diacyl-3-O-[alpha-D-glucosyl-(1-&gt; 2)-alpha-D-glucosyl]-sn-glycerol + UDP + H(+). The protein operates within glycolipid metabolism; diglucosyl-diacylglycerol biosynthesis. With respect to regulation, activated by the negatively charged lipids phosphatidylglycerol (PG), cardiolipin (CL), nonbilayer-prone 1,3-DAG, 1,2-dioleoylphosphatidylglycerol (DOPG) and 1,2-dioleoylphosphatidylserine (DOPS). Inhibited by 1,2-diacyl-3-O-(alpha-D-galactopyranosyl)-sn-glycerol, 1,2-diacyl-3-O-[6-O-acyl(alpha-D-glucopyranosyl)]-sn-glycerol and 1,2-diacyl-3-O-[alpha-D-glucopyranosyl-(1-&gt;2)-O-(6-O-acyl-alpha-D-glucopyranosyl)]-sn-glycerol. Functionally, processive glucosyltransferase involved in the biosynthesis of both the non-bilayer-prone alpha-monoglucosyldiacylglycerol and the bilayer-forming membrane lipid alpha-diglucosyldiacylglycerol. These are major components for maintaining the anionic lipid surface charge density, for balancing the bilayer to non-bilayer phase equilibria and for keeping a constant lipid bilayer spontaneous curvature (curvature packing stress). Catalyzes the transfer of a glucosyl residue from UDP-Glc to diacylglycerol (DAG) acceptor to form the corresponding alpha-glucosyl-DAG (1,2-diacyl-3-O-(alpha-D-glucopyranosyl)-sn-glycerol), which then acts as acceptor to give alpha-diglucosyl-DAG product (3-O-(alpha-D-glucopyranosyl-alpha-(1-&gt;2)-D-glucopyranosyl)-1,2-diacyl-sn-glycerol). It can only use UDP-Glc as sugar donor. The protein is Processive diacylglycerol alpha-glucosyltransferase (dgs) of Acholeplasma laidlawii.